The following is a 286-amino-acid chain: MKTIPDALFGLIGFPVSHSVSPAMQNAAFKHCKLDYLYLTIAAKPEELQNVIASMGPLNIRGLNVTIPHKIEVIKYIDSLDPAAEKIGAVNTIVNENGRLKGYNTDFGGFVRLLEHNRIAPAKQRFTLLGAGGSAHAIALAVCNLGGHLTVLARQEEKAKDLAGKMCLRLSGKTQGLELNDTNLEEALADTDVIVNCTPVGMGNLAGQSLVPPRLLRPDLTVIDAIYNPCKTRLLEDAEKRGARIINGLEMLVWQGAMSFEIWTNQKAPFRLMMKEAELALDENKK.

Residues 19-21 (SVS) and T66 each bind shikimate. Residue K70 is the Proton acceptor of the active site. Residues N91 and D106 each coordinate shikimate. NADP(+) contacts are provided by residues 130 to 134 (GAGGS) and A225. Y227 contacts shikimate. G248 contributes to the NADP(+) binding site.

This sequence belongs to the shikimate dehydrogenase family. Homodimer.

The catalysed reaction is shikimate + NADP(+) = 3-dehydroshikimate + NADPH + H(+). The protein operates within metabolic intermediate biosynthesis; chorismate biosynthesis; chorismate from D-erythrose 4-phosphate and phosphoenolpyruvate: step 4/7. Functionally, involved in the biosynthesis of the chorismate, which leads to the biosynthesis of aromatic amino acids. Catalyzes the reversible NADPH linked reduction of 3-dehydroshikimate (DHSA) to yield shikimate (SA). In Dehalococcoides mccartyi (strain ATCC BAA-2266 / KCTC 15142 / 195) (Dehalococcoides ethenogenes (strain 195)), this protein is Shikimate dehydrogenase (NADP(+)).